The primary structure comprises 403 residues: Na(+)/H(+) antiporter NhaA (403 aa).

The next 11 helical transmembrane spans lie at 23 to 43 (AFFL…PWAA), 66 to 86 (VAAW…ILEI), 101 to 121 (VALP…TYLL), 132 to 152 (GWAI…LALG), 161 to 181 (AWLM…IALF), 184 to 204 (GSMY…LIGA), 219 to 239 (GILL…AGVI), 257 to 277 (WVSS…FGFM), 297 to 317 (LGIM…ATLL), 333 to 353 (GMLF…LFVA), and 363 to 383 (IAPA…TGWF).

This sequence belongs to the NhaA Na(+)/H(+) (TC 2.A.33) antiporter family.

The protein resides in the cell inner membrane. The catalysed reaction is Na(+)(in) + 2 H(+)(out) = Na(+)(out) + 2 H(+)(in). Its function is as follows. Na(+)/H(+) antiporter that extrudes sodium in exchange for external protons. This Gluconobacter oxydans (strain 621H) (Gluconobacter suboxydans) protein is Na(+)/H(+) antiporter NhaA.